We begin with the raw amino-acid sequence, 89 residues long: Putative defensin-like protein 230 (89 aa).

A signal peptide spans 1 to 26 (MRSVIWFIVSYTLMLLVLRGGKEVEA). Disulfide bonds link Cys-30–Cys-84, Cys-40–Cys-65, Cys-48–Cys-78, and Cys-63–Cys-80.

The protein belongs to the DEFL family.

It localises to the secreted. This chain is Putative defensin-like protein 230 (SCRL24), found in Arabidopsis thaliana (Mouse-ear cress).